We begin with the raw amino-acid sequence, 504 residues long: Sodium-coupled neutral amino acid symporter 2 (504 aa).

The tract at residues 1–23 is disordered; sequence MKKTEMGRFNISPDEDSSSYSSN. At 1–76 the chain is on the cytoplasmic side; that stretch reads MKKTEMGRFN…HPGTTSFGMS (76 aa). The interval 1-96 is regulates protein turnover upon amino acid deprivation; sequence MKKTEMGRFN…SGILGLSYAM (96 aa). A phosphoserine mark is found at Ser12, Ser21, Ser22, and Ser55. A helical membrane pass occupies residues 77-96; sequence VFNLSNAIVGSGILGLSYAM. A Na(+)-binding site is contributed by Asn82. Topologically, residues 97–102 are extracellular; sequence ANTGIA. Residues 103–123 form a helical membrane-spanning segment; that stretch reads LFIILLTFVSIFSLYSVHLLL. At 124 to 158 the chain is on the cytoplasmic side; sequence KTANEGGSLLYEQLGHKAYGLAGKLAASGSITMQN. Residues 159 to 177 form a helical membrane-spanning segment; the sequence is IGAMSSYLFIVKYELPLVI. Residues 178-188 lie on the Extracellular side of the membrane; that stretch reads KALMNIEDTNG. The chain crosses the membrane as a helical span at residues 189–209; it reads LWYLNGDYLVLLVSLVLILPL. The Cytoplasmic portion of the chain corresponds to 210–217; that stretch reads SLLRNLGY. A helical membrane pass occupies residues 218 to 238; that stretch reads LGYTSGLSLLCMIFFLIVVIC. The Extracellular portion of the chain corresponds to 239–289; the sequence is KKFQIPCPVEAALVANETVNGTFTQAALALAFNSTADDACRPRYFIFNSQT. Residues Cys245 and Cys278 are joined by a disulfide bond. Asn254 and Asn258 each carry an N-linked (GlcNAc...) asparagine glycan. A helical membrane pass occupies residues 290 to 310; the sequence is VYAVPILTFSFVCHPAVLPIY. Over 311-326 the chain is Cytoplasmic; it reads EELKSRSRRRMMNVSK. A helical membrane pass occupies residues 327 to 347; that stretch reads ISFFAMFLMYLLAALFGYLTF. The Extracellular portion of the chain corresponds to 348-368; the sequence is YGHVESELLHTYSEIVGTDIL. A helical membrane pass occupies residues 369 to 389; sequence LLVVRLAVLVAVTLTVPVVIF. Thr383 contributes to the Na(+) binding site. Residues 390–410 lie on the Cytoplasmic side of the membrane; that stretch reads PIRSSVTHLLCPTKEFSWLRH. Residues 411–431 form a helical membrane-spanning segment; that stretch reads SIITVTILSFTNLLVIFVPTI. The Extracellular segment spans residues 432-433; that stretch reads RD. Residues 434-454 form a helical membrane-spanning segment; that stretch reads IFGFIGASAAAMLIFILPSAF. Residues 455 to 469 lie on the Cytoplasmic side of the membrane; the sequence is YIKLVKKEPMRSVQK. A helical membrane pass occupies residues 470–492; the sequence is IGALCFLLSGIVVMIGSMGLIVL. Over 493–504 the chain is Extracellular; it reads DWVHDASAAGGH.

The protein belongs to the amino acid/polyamine transporter 2 family. In terms of processing, polyubiquitination by NEDD4L regulates the degradation and the activity of SLC38A2. Expressed in cerebral and cerebellar astrocytes and neurons.

The protein resides in the cell membrane. It carries out the reaction L-alanine(in) + Na(+)(in) = L-alanine(out) + Na(+)(out). It catalyses the reaction glycine(in) + Na(+)(in) = glycine(out) + Na(+)(out). The enzyme catalyses L-serine(in) + Na(+)(in) = L-serine(out) + Na(+)(out). The catalysed reaction is L-proline(in) + Na(+)(in) = L-proline(out) + Na(+)(out). It carries out the reaction L-methionine(in) + Na(+)(in) = L-methionine(out) + Na(+)(out). It catalyses the reaction L-histidine(in) + Na(+)(in) = L-histidine(out) + Na(+)(out). The enzyme catalyses L-asparagine(in) + Na(+)(in) = L-asparagine(out) + Na(+)(out). The catalysed reaction is L-glutamine(in) + Na(+)(in) = L-glutamine(out) + Na(+)(out). It carries out the reaction L-threonine(in) + Na(+)(in) = L-threonine(out) + Na(+)(out). It catalyses the reaction L-leucine(in) + Na(+)(in) = L-leucine(out) + Na(+)(out). The enzyme catalyses L-phenylalanine(in) + Na(+)(in) = L-phenylalanine(out) + Na(+)(out). Inhibited by N-methyl-D-glucamine. Inhibited by choline. Allosteric regulation of sodium ions binding by pH. Symporter that cotransports neutral amino acids and sodium ions from the extracellular to the intracellular side of the cell membrane. The transport is pH-sensitive, Li(+)-intolerant, electrogenic, driven by the Na(+) electrochemical gradient and cotransports of neutral amino acids and sodium ions with a stoichiometry of 1:1. May function in the transport of amino acids at the blood-brain barrier. May function in the transport of amino acids in the supply of maternal nutrients to the fetus through the placenta. Maintains a key metabolic glutamine/glutamate balance underpinning retrograde signaling by dendritic release of the neurotransmitter glutamate. Transports L-proline in differentiating osteoblasts for the efficient synthesis of proline-enriched proteins and provides proline essential for osteoblast differentiation and bone formation during bone development. The sequence is that of Sodium-coupled neutral amino acid symporter 2 from Mus musculus (Mouse).